A 341-amino-acid polypeptide reads, in one-letter code: Serine/threonine-protein kinase PDIK1L (341 aa).

In terms of domain architecture, Protein kinase spans 8-334; that stretch reads YDLIREVGRG…LELRLVQIAF (327 aa). ATP-binding positions include 14-22 and K37; that span reads VGRGSYGVV. Residue D164 is the Proton acceptor of the active site.

It belongs to the protein kinase superfamily. Ser/Thr protein kinase family. In terms of tissue distribution, expressed in liver, kidney, pancreas, spleen, thymus and prostate.

The protein resides in the nucleus. It catalyses the reaction L-seryl-[protein] + ATP = O-phospho-L-seryl-[protein] + ADP + H(+). The enzyme catalyses L-threonyl-[protein] + ATP = O-phospho-L-threonyl-[protein] + ADP + H(+). The polypeptide is Serine/threonine-protein kinase PDIK1L (PDIK1L) (Homo sapiens (Human)).